A 299-amino-acid chain; its full sequence is ATP phosphoribosyltransferase (299 aa).

The protein belongs to the ATP phosphoribosyltransferase family. Long subfamily. In terms of assembly, equilibrium between an active dimeric form, an inactive hexameric form and higher aggregates. Interconversion between the various forms is largely reversible and is influenced by the natural substrates and inhibitors of the enzyme. Mg(2+) serves as cofactor.

The protein localises to the cytoplasm. It catalyses the reaction 1-(5-phospho-beta-D-ribosyl)-ATP + diphosphate = 5-phospho-alpha-D-ribose 1-diphosphate + ATP. It functions in the pathway amino-acid biosynthesis; L-histidine biosynthesis; L-histidine from 5-phospho-alpha-D-ribose 1-diphosphate: step 1/9. With respect to regulation, feedback inhibited by histidine. Catalyzes the condensation of ATP and 5-phosphoribose 1-diphosphate to form N'-(5'-phosphoribosyl)-ATP (PR-ATP). Has a crucial role in the pathway because the rate of histidine biosynthesis seems to be controlled primarily by regulation of HisG enzymatic activity. The chain is ATP phosphoribosyltransferase from Shigella flexneri serotype 5b (strain 8401).